We begin with the raw amino-acid sequence, 854 residues long: Protein mono-ADP-ribosyltransferase PARP8 (854 aa).

Disordered stretches follow at residues 113–138 and 291–310; these read NGEE…EFYY and SYPP…EQDG. Positions 123–135 are enriched in acidic residues; it reads VEEDSEGDNDSEE. ADP-ribosylcysteine occurs at positions 332, 367, 376, and 395. A PARP catalytic domain is found at 617-844; it reads EMTQAPYLEI…QEGGIHKEIL (228 aa). The segment at 750-777 is disordered; the sequence is QKVSAKDEPASSSKSSNTSQSQKKGQQS. Positions 760-777 are enriched in low complexity; sequence SSSKSSNTSQSQKKGQQS.

It belongs to the ARTD/PARP family. Post-translationally, auto-mono-ADP-ribosylated.

The enzyme catalyses L-cysteinyl-[protein] + NAD(+) = S-(ADP-D-ribosyl)-L-cysteinyl-[protein] + nicotinamide + H(+). Mono-ADP-ribosyltransferase that mediates mono-ADP-ribosylation of target proteins. The chain is Protein mono-ADP-ribosyltransferase PARP8 from Homo sapiens (Human).